The primary structure comprises 292 residues: UPF0282 protein MJ1629 (292 aa).

It belongs to the UPF0282 family.

This Methanocaldococcus jannaschii (strain ATCC 43067 / DSM 2661 / JAL-1 / JCM 10045 / NBRC 100440) (Methanococcus jannaschii) protein is UPF0282 protein MJ1629.